Reading from the N-terminus, the 294-residue chain is NAD kinase (294 aa).

D74 (proton acceptor) is an active-site residue. Residues 74–75, 148–149, R159, R176, D178, 189–194, and Q247 contribute to the NAD(+) site; these read DG, ND, and TAYALS.

Belongs to the NAD kinase family. A divalent metal cation is required as a cofactor.

The protein resides in the cytoplasm. The enzyme catalyses NAD(+) + ATP = ADP + NADP(+) + H(+). Involved in the regulation of the intracellular balance of NAD and NADP, and is a key enzyme in the biosynthesis of NADP. Catalyzes specifically the phosphorylation on 2'-hydroxyl of the adenosine moiety of NAD to yield NADP. This Azoarcus sp. (strain BH72) protein is NAD kinase.